The primary structure comprises 390 residues: MRFLTAGESHGPQLTAIIEGVPAQLPLLAEDIDRELARRQGGYGRGRRMQIEKDRVQIVSGVRHGMTTGAPITFVVENKDWKNWTKIMGAEPISEEEAEKMRRKLTRPRPGHADLNGAIKYGHRDMRNVLERSSARETTVRVACGALAKVILKACGIEVAGHVREIGGIRAEETNYATIQELQKRSEESPVRCLDEDASKKMMAAIDKAKQDGDSIGGIVEVVVAGVPIGLGSHVHYDRKLDGKIAGAVMSINAFKGVEIGIGFEAARLPGSQVHDEITWSEEEGYKRKTNRLGGFEGGMTNGMPIVVKGVMKPIPTLYKPLQSVDIDSKEPFAAGVERSDSCAVPAASVVCENVVAWEVANALLDTFGSDQLPLIQAAVERHHAASKEF.

NADP(+) contacts are provided by arginine 39 and arginine 45. FMN contacts are provided by residues 132–134, 253–254, glycine 298, 313–317, and arginine 339; these read RSS, NA, and KPIPT.

The protein belongs to the chorismate synthase family. As to quaternary structure, homotetramer. Requires FMNH2 as cofactor.

The enzyme catalyses 5-O-(1-carboxyvinyl)-3-phosphoshikimate = chorismate + phosphate. It functions in the pathway metabolic intermediate biosynthesis; chorismate biosynthesis; chorismate from D-erythrose 4-phosphate and phosphoenolpyruvate: step 7/7. In terms of biological role, catalyzes the anti-1,4-elimination of the C-3 phosphate and the C-6 proR hydrogen from 5-enolpyruvylshikimate-3-phosphate (EPSP) to yield chorismate, which is the branch point compound that serves as the starting substrate for the three terminal pathways of aromatic amino acid biosynthesis. This reaction introduces a second double bond into the aromatic ring system. This chain is Chorismate synthase, found in Shouchella clausii (strain KSM-K16) (Alkalihalobacillus clausii).